Reading from the N-terminus, the 439-residue chain is MGKGSEGRSAAREMTAEANGDKRKTILIEGVLYDATNFKHPGGSIINFLTEGEAGVDATQAYREFHQRSGKADKYLKSLPKLDASKVESRFSAKEQARRDAMTRDYAAFREELVAEGYFDPSIPHMIYRVVEIVALFALSFWLMSKASPTSLVLGVVMNGIAQGRCGWVMHEMGHGSFTGVIWLDDRMCEFFYGVGCGMSGHYWKNQHSKHHAAPNRLEHDVDLNTLPLVAFNERVVRKVKPGSLLALWLRVQAYLFAPVSCLLIGLGWTLYLHPRYMLRTKRHMEFVWIFARYIGWFSLMGALGYSPGTSVGMYLCSFGLGCIYIFLQFAVSHTHLPVTNPEDQLHWLEYAADHTVNISTKSWLVTWWMSNLNFQIEHHLFPTAPQFRFKEISPRVEALFKRHNLPYYDLPYTSAVSTTFANLYSVGHSVGADTKKQD.

Residues 7–88 (GRSAAREMTA…LPKLDASKVE (82 aa)) form the Cytochrome b5 heme-binding domain. Heme is bound by residues H40 and H66. The helical transmembrane segment at 123–143 (IPHMIYRVVEIVALFALSFWL) threads the bilayer. The Histidine box-1 signature appears at 171–175 (HEMGH). Positions 208-213 (HSKHHA) match the Histidine box-2 motif. 3 consecutive transmembrane segments (helical) span residues 254-274 (AYLF…LYLH), 287-307 (FVWI…LGYS), and 312-332 (VGMY…QFAV). The Histidine box-3 motif lies at 376 to 380 (QIEHH).

This sequence belongs to the fatty acid desaturase type 1 family. Fe(2+) is required as a cofactor.

It is found in the membrane. The enzyme catalyses an (8Z,11Z,14Z)-icosatrienoyl-containing glycerolipid + 2 Fe(II)-[cytochrome b5] + O2 + 2 H(+) = (5Z,8Z,11Z,14Z)-eicosatetraenoyl-containing glycerolipid + 2 Fe(III)-[cytochrome b5] + 2 H2O. It carries out the reaction an (8Z,11Z,14Z,17Z)-eicosatetraenoyl-containing glycerolipid + 2 Fe(II)-[cytochrome b5] + O2 + 2 H(+) = a (5Z,8Z,11Z,14Z,17Z)-eicosapentaenoyl-containing glycerolipid + 2 Fe(III)-[cytochrome b5] + 2 H2O. In terms of biological role, fatty acid desaturase that introduces a cis double bond at the 5-position in 20-carbon polyunsaturated fatty acids incorporated in a glycerolipid that contain a Delta(8) double bond. This chain is Acyl-lipid (8-3)-desaturase, found in Thraustochytrium sp.